Reading from the N-terminus, the 97-residue chain is Signal recognition particle 19 kDa protein (97 aa).

This sequence belongs to the SRP19 family. Part of the signal recognition particle protein translocation system, which is composed of SRP and FtsY. Archaeal SRP consists of a 7S RNA molecule of 300 nucleotides and two protein subunits: SRP54 and SRP19.

It localises to the cytoplasm. Involved in targeting and insertion of nascent membrane proteins into the cytoplasmic membrane. Binds directly to 7S RNA and mediates binding of the 54 kDa subunit of the SRP. The protein is Signal recognition particle 19 kDa protein of Methanocella arvoryzae (strain DSM 22066 / NBRC 105507 / MRE50).